The primary structure comprises 200 residues: Molybdenum cofactor guanylyltransferase (200 aa).

GTP is bound by residues 10–12 (LAG), lysine 23, asparagine 51, aspartate 69, and aspartate 99. Aspartate 99 serves as a coordination point for Mg(2+).

This sequence belongs to the MobA family. In terms of assembly, monomer. Requires Mg(2+) as cofactor.

It localises to the cytoplasm. It carries out the reaction Mo-molybdopterin + GTP + H(+) = Mo-molybdopterin guanine dinucleotide + diphosphate. Transfers a GMP moiety from GTP to Mo-molybdopterin (Mo-MPT) cofactor (Moco or molybdenum cofactor) to form Mo-molybdopterin guanine dinucleotide (Mo-MGD) cofactor. This chain is Molybdenum cofactor guanylyltransferase, found in Shewanella pealeana (strain ATCC 700345 / ANG-SQ1).